Here is a 466-residue protein sequence, read N- to C-terminus: Secreted RxLR effector protein 101 (466 aa).

Positions 1–21 (MRGAYSVITALLVVASSQIAA) are cleaved as a signal peptide. Residues 48–63 (RYLRGSQHVHDSNEER) carry the RxLR-dEER motif. Disordered regions lie at residues 99–127 (KMPH…GANA) and 384–405 (RTFN…VRSS). The span at 109 to 121 (KVSRVTRTGKKMT) shows a compositional bias: basic residues. The segment covering 385–395 (TFNGNTDTASL) has biased composition (polar residues).

It belongs to the RxLR effector family.

It localises to the secreted. The protein localises to the host nucleus. Its function is as follows. Secreted effector that partially suppresses the host cell death induced by cell death-inducing proteins. This chain is Secreted RxLR effector protein 101, found in Plasmopara viticola (Downy mildew of grapevine).